Consider the following 202-residue polypeptide: Dynein regulatory complex protein 12 (202 aa).

The interval 1–29 (MPPKKKGIGGSKKEKTKKSTPEKDDGLTE) is disordered. Over residues 11–29 (SKKEKTKKSTPEKDDGLTE) the composition is skewed to basic and acidic residues. A coiled-coil region spans residues 50–161 (GVARQATAVR…ERECEKILHG (112 aa)).

This sequence belongs to the DRC12 family. Component of the nexin-dynein regulatory complex (N-DRC).

It is found in the cytoplasm. The protein localises to the cytoskeleton. Its subcellular location is the flagellum axoneme. Functionally, component of the nexin-dynein regulatory complex (N-DRC), a key regulator of ciliary/flagellar motility which maintains the alignment and integrity of the distal axoneme and regulates microtubule sliding in motile axonemes. This Danio rerio (Zebrafish) protein is Dynein regulatory complex protein 12 (drc12).